The sequence spans 705 residues: Polyribonucleotide nucleotidyltransferase (705 aa).

Asp-485 and Asp-491 together coordinate Mg(2+). In terms of domain architecture, KH spans 552–611; sequence PRVYTMTIAPEKIRDVIGAGGKTINKIIGETGVQIDIKEDGKIYVMSSDSVGANRALKMI. One can recognise an S1 motif domain in the interval 621–689; that stretch reads GEIYLGKVTR…DQGRINLSRR (69 aa).

Belongs to the polyribonucleotide nucleotidyltransferase family. The cofactor is Mg(2+).

The protein localises to the cytoplasm. The enzyme catalyses RNA(n+1) + phosphate = RNA(n) + a ribonucleoside 5'-diphosphate. Involved in mRNA degradation. Catalyzes the phosphorolysis of single-stranded polyribonucleotides processively in the 3'- to 5'-direction. In Clostridium tetani (strain Massachusetts / E88), this protein is Polyribonucleotide nucleotidyltransferase.